A 148-amino-acid chain; its full sequence is MASTIFVLNGPNLNALGKREPGIYGGKTLADIEAMCKAEAKLLGFDIDFRQSNHEGTLVDWLHEAGEKSVGIAINPAAYGHTSIAMHDAIRAITVPVVELHLSNIHAREEFRHKSMIAPAVKGVICGFGAQSYILALHALKNLTEKSK.

Catalysis depends on Tyr24, which acts as the Proton acceptor. Asn75, His81, and Asp88 together coordinate substrate. His101 functions as the Proton donor in the catalytic mechanism. Substrate is bound by residues 102–103 (LS) and Arg112.

The protein belongs to the type-II 3-dehydroquinase family. Homododecamer.

It catalyses the reaction 3-dehydroquinate = 3-dehydroshikimate + H2O. It participates in metabolic intermediate biosynthesis; chorismate biosynthesis; chorismate from D-erythrose 4-phosphate and phosphoenolpyruvate: step 3/7. Catalyzes a trans-dehydration via an enolate intermediate. The polypeptide is 3-dehydroquinate dehydratase (Sinorhizobium medicae (strain WSM419) (Ensifer medicae)).